Consider the following 149-residue polypeptide: Large ribosomal subunit protein bL9 (149 aa).

Belongs to the bacterial ribosomal protein bL9 family.

Binds to the 23S rRNA. The chain is Large ribosomal subunit protein bL9 from Legionella pneumophila (strain Paris).